A 252-amino-acid polypeptide reads, in one-letter code: Neurexophilin-3 (252 aa).

The N-terminal stretch at 1–22 (MQLTRCCFVFLVQGSLYLVICG) is a signal peptide. An II region spans residues 23–75 (QDDGPPGSEDPERDDHEGQPRPRVPRKRGHISPKSRPMANSTLLGLLAPPGEA). The interval 27–58 (PPGSEDPERDDHEGQPRPRVPRKRGHISPKSR) is disordered. Over residues 45-55 (RVPRKRGHISP) the composition is skewed to basic residues. Residues Asn-62, Asn-127, Asn-137, and Asn-143 are each glycosylated (N-linked (GlcNAc...) asparagine). The interval 76-157 (WGILGQPPNR…LVPPSKAVEF (82 aa)) is III. An IV (linker domain) region spans residues 158 to 166 (HQEQQIFIE). The interval 167–252 (AKASKIFNCR…HSDTPYYPSG (86 aa)) is v (Cys-rich).

It belongs to the neurexophilin family. Post-translationally, may be proteolytically processed at the boundary between the N-terminal non-conserved and the central conserved domain in neuron-like cells. As to expression, highest level in brain.

Its subcellular location is the secreted. May be signaling molecules that resemble neuropeptides. Ligand for alpha-neurexins. The chain is Neurexophilin-3 (NXPH3) from Homo sapiens (Human).